The primary structure comprises 77 residues: Putative defensin-like protein 187 (77 aa).

The first 19 residues, 1-19 (MKNSSIMFVLIVVFLISSS), serve as a signal peptide directing secretion. 3 cysteine pairs are disulfide-bonded: cysteine 31–cysteine 77, cysteine 43–cysteine 71, and cysteine 47–cysteine 73.

It belongs to the DEFL family.

Its subcellular location is the secreted. This Arabidopsis thaliana (Mouse-ear cress) protein is Putative defensin-like protein 187 (LCR42).